A 487-amino-acid polypeptide reads, in one-letter code: Chromosomal replication initiator protein DnaA (487 aa).

A domain I, interacts with DnaA modulators region spans residues 1–71 (MMHDALFERF…TSLVQSEDPD (71 aa)). The tract at residues 71-141 (DVLKVEILVR…QGGSGPLFGS (71 aa)) is domain II. A domain III, AAA+ region region spans residues 142 to 364 (PLDTRFTFDT…GAFNQLMFRR (223 aa)). Residues glycine 188, glycine 190, lysine 191, and threonine 192 each coordinate ATP. The domain IV, binds dsDNA stretch occupies residues 365–487 (SFEPNLSVDR…LKRLINENNA (123 aa)).

Belongs to the DnaA family. In terms of assembly, oligomerizes as a right-handed, spiral filament on DNA at oriC.

Its subcellular location is the cytoplasm. Plays an essential role in the initiation and regulation of chromosomal replication. ATP-DnaA binds to the origin of replication (oriC) to initiate formation of the DNA replication initiation complex once per cell cycle. Binds the DnaA box (a 9 base pair repeat at the origin) and separates the double-stranded (ds)DNA. Forms a right-handed helical filament on oriC DNA; dsDNA binds to the exterior of the filament while single-stranded (ss)DNA is stabiized in the filament's interior. The ATP-DnaA-oriC complex binds and stabilizes one strand of the AT-rich DNA unwinding element (DUE), permitting loading of DNA polymerase. After initiation quickly degrades to an ADP-DnaA complex that is not apt for DNA replication. Binds acidic phospholipids. This chain is Chromosomal replication initiator protein DnaA, found in Agrobacterium fabrum (strain C58 / ATCC 33970) (Agrobacterium tumefaciens (strain C58)).